A 349-amino-acid chain; its full sequence is NADH-quinone oxidoreductase subunit H (349 aa).

8 helical membrane passes run 19–39 (VWTLTKIVAIIAPLMLCVAYL), 88–108 (GLFILGPILAIAPSLAAWAVV), 123–143 (LLFLLAITSVEVYGVIIAGWA), 161–181 (VSYEVAMGFALICVLLISASL), 202–222 (FLSWNWIPLFPMFIVFLISGI), 249–269 (GMAFALFFLAEYANMILVSIL), 284–304 (FLPDGFFWLALKTAFFLFVFL), and 325–345 (VFIPITLVWVIVVAVWMMSPL).

It belongs to the complex I subunit 1 family. In terms of assembly, NDH-1 is composed of 14 different subunits. Subunits NuoA, H, J, K, L, M, N constitute the membrane sector of the complex.

It localises to the cell inner membrane. It catalyses the reaction a quinone + NADH + 5 H(+)(in) = a quinol + NAD(+) + 4 H(+)(out). Its function is as follows. NDH-1 shuttles electrons from NADH, via FMN and iron-sulfur (Fe-S) centers, to quinones in the respiratory chain. The immediate electron acceptor for the enzyme in this species is believed to be ubiquinone. Couples the redox reaction to proton translocation (for every two electrons transferred, four hydrogen ions are translocated across the cytoplasmic membrane), and thus conserves the redox energy in a proton gradient. This subunit may bind ubiquinone. In Aromatoleum aromaticum (strain DSM 19018 / LMG 30748 / EbN1) (Azoarcus sp. (strain EbN1)), this protein is NADH-quinone oxidoreductase subunit H.